The primary structure comprises 478 residues: CDK5 and ABL1 enzyme substrate 2 (478 aa).

Residues 1 to 121 (MAAAAAGGAP…GLGLDGQRQR (121 aa)) are disordered. The segment covering 11 to 24 (GPAPGPAGPPPPAA) has biased composition (pro residues). Over residues 25–35 (PTSAARAPPQA) the composition is skewed to low complexity. Over residues 36–46 (LRRRGDSRRRQ) the composition is skewed to basic residues. Residues 69–92 (EKPPPPPAEAREPPAPPPPEPPTG) are compositionally biased toward pro residues. Phosphoserine is present on residues Ser130 and Ser208. The disordered stretch occupies residues 257–296 (SDSHGLLPTPRPSVPRTLPGSRHKPAPTKSAPASTELGSD).

It belongs to the cyclin family. In terms of assembly, binds to CDK3, CDK5 and ABL1. The C-terminal cyclin-box-like region binds to CDK5.

Functionally, unknown. Probably involved in G1-S cell cycle transition. In Homo sapiens (Human), this protein is CDK5 and ABL1 enzyme substrate 2 (CABLES2).